Reading from the N-terminus, the 976-residue chain is Alpha-amylase (976 aa).

An N-terminal signal peptide occupies residues 1 to 33 (MKRGKLWGRLVSAAGLSLSIFLSSIGNVSTAYA). The disordered stretch occupies residues 45–98 (TKENTESATDASSNEASDAEADNDTDEAITDASSKELSAENDGASESDSSFDEY). The segment covering 50–60 (ESATDASSNEA) has biased composition (low complexity). Acidic residues-rich tracts occupy residues 61 to 73 (SDAE…DEAI) and 87 to 96 (GASESDSSFD). Positions 243, 284, and 293 each coordinate Ca(2+). Catalysis depends on aspartate 323, which acts as the Nucleophile. Residue histidine 327 participates in Ca(2+) binding. Residue glutamate 375 is the Proton donor of the active site.

It belongs to the glycosyl hydrolase 13 family. In terms of assembly, monomer. It depends on Ca(2+) as a cofactor.

The catalysed reaction is Endohydrolysis of (1-&gt;4)-alpha-D-glucosidic linkages in polysaccharides containing three or more (1-&gt;4)-alpha-linked D-glucose units.. This chain is Alpha-amylase (amyA), found in Butyrivibrio fibrisolvens.